A 1190-amino-acid polypeptide reads, in one-letter code: JNK-interacting protein (1190 aa).

The interval 1-35 (MACNLSPVNEMADSITSSTPSEIVYGGPGSPDEHR) is disordered. The region spanning 24-112 (VYGGPGSPDE…QTQYEREKAL (89 aa)) is the RH1 domain. The stretch at 78 to 165 (LDLAYLERDE…TDHASRLEER (88 aa)) forms a coiled coil. The segment at 263–364 (DEFSSDIEPS…DDTSDDGSLG (102 aa)) is disordered. The segment covering 277-292 (PQSSADALTSPITTKE) has biased composition (polar residues). A coiled-coil region spans residues 383–491 (KNALNIVKND…EESIKWTEMQ (109 aa)). The RH2 domain occupies 456 to 542 (RKRFTRSEMQ…RASSSRGKMT (87 aa)). The tract at residues 775–829 (EDGVPTYCSNDMKPSPKRTRDFSISEVAPVDSSAPVKEDPLPPPANRPGGRAALP) is disordered.

The protein belongs to the JIP scaffold family. Expressed in neurons of the ventral cord, retrovesicular and preanal ganglia and nerve ring, intestinal cells, seam and hypodermal cells, body wall, head muscle and pharynx.

It localises to the cytoplasm. It is found in the perinuclear region. Functionally, the JNK-interacting protein (JIP) group of scaffold proteins selectively mediates JNK signaling by aggregating specific components of the MAPK cascade to form a functional JNK signaling module. May function as a regulator of synaptic vesicle transport, through interactions with the JNK-signaling components and motor proteins. Binds specific components of the JNK signaling pathway namely jnk-1, jkk-1 and sek-1. Associates with components of the motor protein, kinesin-1. Pre-assembled unc-16 scaffolding complexes are then transported as a cargo of kinesin, to the required subcellular location. Regulates the retrograde transport of autophagosomes from the neurites to the cell body of AIY interneurons. The protein is JNK-interacting protein of Caenorhabditis elegans.